The primary structure comprises 340 residues: Maltose epimerase (340 aa).

Substrate is bound at residue arginine 79. Residue histidine 178 is the Proton donor of the active site. A substrate-binding site is contributed by aspartate 247. Glutamate 305 serves as the catalytic Proton acceptor.

Belongs to the aldose epimerase family.

The enzyme catalyses alpha-maltose = beta-maltose. It participates in carbohydrate metabolism; hexose metabolism. Functionally, catalyzes the interconversion of alpha and beta anomers of maltose. This Levilactobacillus brevis (strain ATCC 367 / BCRC 12310 / CIP 105137 / JCM 1170 / LMG 11437 / NCIMB 947 / NCTC 947) (Lactobacillus brevis) protein is Maltose epimerase.